The sequence spans 435 residues: Probable protein arginine N-methyltransferase 6 (435 aa).

The disordered stretch occupies residues 1–48; that stretch reads MQSGGDFSNGFHGDHHRELELEDKQGPSLSSFGRAKKRSHAGARDPRG. Basic and acidic residues predominate over residues 12-25; sequence HGDHHRELELEDKQ. The 339-residue stretch at 80 to 418 folds into the SAM-dependent MTase PRMT-type domain; the sequence is DVAYFHSYAH…KENKRFMNIH (339 aa). S-adenosyl-L-methionine is bound by residues His-93, Arg-102, Gly-126, Asp-148, and Glu-177. Residues Glu-191 and Glu-200 contribute to the active site. Positions 333–377 are disordered; sequence PAKNTSETSIASGSSSISPSGEVNQKKRTNPSDALVLSTSPESPP. Low complexity predominate over residues 337 to 354; it reads TSETSIASGSSSISPSGE.

The protein belongs to the class I-like SAM-binding methyltransferase superfamily. Protein arginine N-methyltransferase family. PRMT6 subfamily.

In terms of biological role, arginine methyltransferase that can both catalyze the formation of omega-N monomethylarginine (MMA) and asymmetrical dimethylarginine (aDMA). The sequence is that of Probable protein arginine N-methyltransferase 6 (PRMT6) from Arabidopsis thaliana (Mouse-ear cress).